Reading from the N-terminus, the 116-residue chain is Somatostatin (116 aa).

Positions 1–24 (MLSCRLQCALALLSIALAVGTVSA) are cleaved as a signal peptide. Positions 25–88 (APSDPRLRQF…QDEVRLELER (64 aa)) are excised as a propeptide. The disordered stretch occupies residues 60 to 82 (PSQTENEALESEDLSRGAEQDEV). Residues 72-82 (DLSRGAEQDEV) are compositionally biased toward basic and acidic residues. A disulfide bridge links cysteine 105 with cysteine 116.

This sequence belongs to the somatostatin family.

Its subcellular location is the secreted. Somatostatin inhibits the release of somatotropin. The polypeptide is Somatostatin (SST) (Gallus gallus (Chicken)).